A 289-amino-acid chain; its full sequence is Trimeric intracellular cation channel type B (289 aa).

The Lumenal portion of the chain corresponds to 1–18 (MDVFAFFNLNELAFGLSK). The helical transmembrane segment at 19-36 (LPMFPYFDMAHYIISVMS) threads the bilayer. Residues 37 to 49 (LREQPGALCVSQR) lie on the Cytoplasmic side of the membrane. The chain crosses the membrane as a helical span at residues 50 to 73 (SPLACWFSSMLYCFGGAVLSALML). The Lumenal segment spans residues 74-85 (ADAPVAPLSNTT). A helical membrane pass occupies residues 86–103 (NLLLATLMWYLVFYCPLD). Residues 104-107 (VVYS) lie on the Cytoplasmic side of the membrane. The chain crosses the membrane as a helical span at residues 108 to 125 (LASLLPLRLVLTAMKEVT). A 1,2-diacyl-sn-glycero-3-phospho-(1D-myo-inositol-4,5-bisphosphate) is bound by residues Lys122 and Arg126. The Lumenal segment spans residues 126-144 (RTWKVLSGVSQAGSKYSDA). Residues 145 to 162 (LFVMVAVGWAKGAGGGLI) traverse the membrane as a helical segment. At 163–183 (SNFEQLVRGVWKPETNELLKM) the chain is on the cytoplasmic side. The chain crosses the membrane as a helical span at residues 184-201 (SYPTKVTLLGAVVFSLQQ). Residues 202–210 (CRYLPIQTH) lie on the Lumenal side of the membrane. Residues 211-230 (HLTFIYTLFTVTNKTRMMLL) form a helical membrane-spanning segment. The Cytoplasmic portion of the chain corresponds to 231–289 (GSSSHPLSSLESFLYKTLFVRPLTDLSAEHTHSKHNGSVPEPTTAQTHTKEAEASKKTN). Positions 260 to 289 (HTHSKHNGSVPEPTTAQTHTKEAEASKKTN) are disordered. Residues 278 to 289 (HTKEAEASKKTN) show a composition bias toward basic and acidic residues.

Belongs to the TMEM38 family. As to quaternary structure, homotrimer; conformation seems to be controled by binding to diacylglycerol (DAG).

Its subcellular location is the endoplasmic reticulum membrane. It carries out the reaction K(+)(in) = K(+)(out). With respect to regulation, channel activity is activated by increased cytosolic Ca(2+) levels and blocked by luminal high Ca(2+) levels. Intracellular monovalent cation channel required for maintenance of rapid intracellular calcium release. Acts as a potassium counter-ion channel that functions in synchronization with calcium release from intracellular stores. Activated by increased cytosolic Ca(2+) levels. This Danio rerio (Zebrafish) protein is Trimeric intracellular cation channel type B (tmem38b).